The primary structure comprises 1370 residues: Insulin-like growth factor 1 receptor (1370 aa).

An N-terminal signal peptide occupies residues 1–30; that stretch reads MKSGSGGGSPTSLWGLVFLSAALSLWPTSG. Cys-33 and Cys-52 are joined by a disulfide. Residues Asn-51, Asn-102, and Asn-135 are each glycosylated (N-linked (GlcNAc...) asparagine). 13 cysteine pairs are disulfide-bonded: Cys-150/Cys-178, Cys-182/Cys-205, Cys-192/Cys-211, Cys-215/Cys-224, Cys-219/Cys-230, Cys-231/Cys-239, Cys-235/Cys-248, Cys-251/Cys-260, Cys-264/Cys-276, Cys-282/Cys-303, Cys-307/Cys-321, Cys-324/Cys-328, and Cys-332/Cys-354. N-linked (GlcNAc...) asparagine glycosylation occurs at Asn-245. Asn-314 carries N-linked (GlcNAc...) asparagine glycosylation. N-linked (GlcNAc...) asparagine glycosylation is found at Asn-418 and Asn-439. Cysteines 456 and 489 form a disulfide. 2 consecutive Fibronectin type-III domains span residues 490 to 610 and 611 to 709; these read ESDV…TNAS and VPSI…TEAE. N-linked (GlcNAc...) asparagine glycosylation is found at Asn-535, Asn-608, Asn-623, Asn-641, Asn-748, Asn-757, Asn-765, Asn-901, and Asn-914. The Extracellular segment spans residues 742–936; that stretch reads DVLQVANTTM…AKTTYENFMH (195 aa). Residues 835–928 enclose the Fibronectin type-III 3 domain; sequence IPGPVTWEPR…DPVFFYVPAK (94 aa). The helical transmembrane segment at 937-960 threads the bilayer; sequence LIIALPVAILLIVGGLVIMLYVFH. The Cytoplasmic portion of the chain corresponds to 961–1370; the sequence is RKRNNSRLGN…ALPLPQSSTC (410 aa). The IRS1- and SHC1-binding motif lies at 978 to 981; that stretch reads NPEY. Tyr-981 carries the phosphotyrosine modification. Residues 1000–1275 enclose the Protein kinase domain; sequence ITMNRELGQG…SIKDEMEPSF (276 aa). ATP-binding positions include 1006–1014 and Lys-1034; that span reads LGQGSFGMV. Asp-1136 (proton acceptor) is an active-site residue. Tyr-1162, Tyr-1166, and Tyr-1167 each carry phosphotyrosine; by autocatalysis. Residues Lys-1169 and Lys-1172 each participate in a glycyl lysine isopeptide (Lys-Gly) (interchain with G-Cter in ubiquitin) cross-link. Ser-1279 is subject to Phosphoserine; by GSK3-beta. At Ser-1283 the chain carries Phosphoserine. The segment at 1304–1370 is disordered; the sequence is NMESVPLDPS…ALPLPQSSTC (67 aa). Positions 1305 to 1321 are enriched in low complexity; that stretch reads MESVPLDPSASSASLPL. A compositionally biased stretch (basic and acidic residues) spans 1322–1331; sequence PERHSGHKAE.

Belongs to the protein kinase superfamily. Tyr protein kinase family. Insulin receptor subfamily. As to quaternary structure, tetramer of 2 alpha and 2 beta chains linked by disulfide bonds. The alpha chains contribute to the formation of the ligand-binding domain, while the beta chain carries the kinase domain. Interacts with PIK3R1 and with the PTB/PID domains of IRS1 and SHC1 in vitro when autophosphorylated on tyrosine residues. Forms a hybrid receptor with INSR, the hybrid is a tetramer consisting of 1 alpha chain and 1 beta chain of INSR and 1 alpha chain and 1 beta chain of IGF1R. Interacts with ARRB1 and ARRB2. Interacts with GRB10. Interacts with RACK1. Interacts with SOCS1, SOCS2 and SOCS3. Interacts with 14-3-3 proteins. Interacts with NMD2. Interacts with MAP3K5. Interacts with STAT3. Found in a ternary complex with IGF1 and ITGAV:ITGB3 or ITGA6:ITGB4. Interacts (nascent precursor form) with ZFAND2B. In terms of processing, autophosphorylated on tyrosine residues in response to ligand binding. Autophosphorylation occurs in trans, i.e. one subunit of the dimeric receptor phosphorylates tyrosine residues on the other subunit. Autophosphorylation occurs in a sequential manner; Tyr-1166 is predominantly phosphorylated first, followed by phosphorylation of Tyr-1162 and Tyr-1167. While every single phosphorylation increases kinase activity, all three tyrosine residues in the kinase activation loop (Tyr-1162, Tyr-1166 and Tyr-1167) have to be phosphorylated for optimal activity. Can be autophosphorylated at additional tyrosine residues (in vitro). Autophosphorylated is followed by phosphorylation of juxtamembrane tyrosines and C-terminal serines. May also be phosphorylated at Tyr-1162 and Tyr-1167 by mTORC2. Phosphorylation of Tyr-981 is required for IRS1- and SHC1-binding. Phosphorylation of Ser-1279 by GSK-3beta restrains kinase activity and promotes cell surface expression, it requires a priming phosphorylation at Ser-1283. Dephosphorylated by PTPN1. Polyubiquitinated at Lys-1169 and Lys-1172 through both 'Lys-48' and 'Lys-29' linkages, promoting receptor endocytosis and subsequent degradation by the proteasome. Ubiquitination is facilitated by pre-existing phosphorylation. Post-translationally, sumoylated with SUMO1. In terms of processing, controlled by regulated intramembrane proteolysis (RIP). Undergoes metalloprotease-dependent constitutive ectodomain shedding to produce a membrane-anchored 52 kDa C-Terminal fragment which is further processed by presenilin gamma-secretase to yield an intracellular 50 kDa fragment.

Its subcellular location is the cell membrane. The enzyme catalyses L-tyrosyl-[protein] + ATP = O-phospho-L-tyrosyl-[protein] + ADP + H(+). Its activity is regulated as follows. Activated by autophosphorylation at Tyr-1162, Tyr-1166 and Tyr-1167 on the kinase activation loop; phosphorylation at all three tyrosine residues is required for optimal kinase activity. Inhibited by MSC1609119A-1, BMS-754807, PQIP, benzimidazole pyridinone, isoquinolinedione, bis-azaindole, 3-cyanoquinoline, 2,4-bis-arylamino-1,3-pyrimidine, pyrrolopyrimidine, pyrrole-5-carboxaldehyde, picropodophyllin (PPP), tyrphostin derivatives. While most inhibitors bind to the ATP binding pocket, MSC1609119A-1 functions as allosteric inhibitor and binds close to the DFG motif and the activation loop. Dephosphorylated by PTPN1. Receptor tyrosine kinase which mediates actions of insulin-like growth factor 1 (IGF1). Binds IGF1 with high affinity and IGF2 and insulin (INS) with a lower affinity. The activated IGF1R is involved in cell growth and survival control. IGF1R is crucial for tumor transformation and survival of malignant cell. Ligand binding activates the receptor kinase, leading to receptor autophosphorylation, and tyrosines phosphorylation of multiple substrates, that function as signaling adapter proteins including, the insulin-receptor substrates (IRS1/2), Shc and 14-3-3 proteins. Phosphorylation of IRSs proteins lead to the activation of two main signaling pathways: the PI3K-AKT/PKB pathway and the Ras-MAPK pathway. The result of activating the MAPK pathway is increased cellular proliferation, whereas activating the PI3K pathway inhibits apoptosis and stimulates protein synthesis. Phosphorylated IRS1 can activate the 85 kDa regulatory subunit of PI3K (PIK3R1), leading to activation of several downstream substrates, including protein AKT/PKB. AKT phosphorylation, in turn, enhances protein synthesis through mTOR activation and triggers the antiapoptotic effects of IGFIR through phosphorylation and inactivation of BAD. In parallel to PI3K-driven signaling, recruitment of Grb2/SOS by phosphorylated IRS1 or Shc leads to recruitment of Ras and activation of the ras-MAPK pathway. In addition to these two main signaling pathways IGF1R signals also through the Janus kinase/signal transducer and activator of transcription pathway (JAK/STAT). Phosphorylation of JAK proteins can lead to phosphorylation/activation of signal transducers and activators of transcription (STAT) proteins. In particular activation of STAT3, may be essential for the transforming activity of IGF1R. The JAK/STAT pathway activates gene transcription and may be responsible for the transforming activity. JNK kinases can also be activated by the IGF1R. IGF1 exerts inhibiting activities on JNK activation via phosphorylation and inhibition of MAP3K5/ASK1, which is able to directly associate with the IGF1R. When present in a hybrid receptor with INSR, binds IGF1. This Rattus norvegicus (Rat) protein is Insulin-like growth factor 1 receptor (Igf1r).